The sequence spans 122 residues: Holo-[acyl-carrier-protein] synthase (122 aa).

The Mg(2+) site is built by D8 and E58.

This sequence belongs to the P-Pant transferase superfamily. AcpS family. Mg(2+) serves as cofactor.

It localises to the cytoplasm. The catalysed reaction is apo-[ACP] + CoA = holo-[ACP] + adenosine 3',5'-bisphosphate + H(+). In terms of biological role, transfers the 4'-phosphopantetheine moiety from coenzyme A to a Ser of acyl-carrier-protein. This Levilactobacillus brevis (strain ATCC 367 / BCRC 12310 / CIP 105137 / JCM 1170 / LMG 11437 / NCIMB 947 / NCTC 947) (Lactobacillus brevis) protein is Holo-[acyl-carrier-protein] synthase.